Consider the following 245-residue polypeptide: Phycoerythrobilin:ferredoxin oxidoreductase (245 aa).

It belongs to the HY2 family.

It catalyses the reaction (3Z)-phycoerythrobilin + oxidized 2[4Fe-4S]-[ferredoxin] = 15,16-dihydrobiliverdin + reduced 2[4Fe-4S]-[ferredoxin] + 2 H(+). Catalyzes the two-electron reduction of the C2 and C3(1) diene system of 15,16-dihydrobiliverdin. The protein is Phycoerythrobilin:ferredoxin oxidoreductase (pebB) of Gloeobacter violaceus (strain ATCC 29082 / PCC 7421).